We begin with the raw amino-acid sequence, 89 residues long: Large ribosomal subunit protein bL27 (89 aa).

A disordered region spans residues Met1–Leu21.

Belongs to the bacterial ribosomal protein bL27 family.

In Roseobacter denitrificans (strain ATCC 33942 / OCh 114) (Erythrobacter sp. (strain OCh 114)), this protein is Large ribosomal subunit protein bL27.